Consider the following 648-residue polypeptide: Serine/threonine-protein phosphatase 1 regulatory subunit PIG1 (648 aa).

The segment covering S20–S51 has biased composition (low complexity). The disordered stretch occupies residues S20–G52. Residues H201 to T331 enclose the CBM21 domain. Over residues R593–L609 the composition is skewed to polar residues. Positions R593–S629 are disordered.

Regulates the activity of glycogen synthase. It is most probably a regulatory subunit for protein phosphatase type 1. This is Serine/threonine-protein phosphatase 1 regulatory subunit PIG1 (PIG1) from Saccharomyces cerevisiae (strain ATCC 204508 / S288c) (Baker's yeast).